A 175-amino-acid chain; its full sequence is Apoptosis regulator Bcl-2 homolog (175 aa).

The interval 37-42 is mediates interaction with human NOP53 and localization to host nucleolus; that stretch reads KLYITG. A helical transmembrane segment spans residues 153–173; sequence MTALLGSIALLATILAAVAMS.

This sequence belongs to the Bcl-2 family. In terms of assembly, interacts with human NOP53; may sequester ORF16 in host nucleolus and reduce its antiapoptotic activity. Interacts with ORF55.

It is found in the host membrane. The protein resides in the host mitochondrion. The protein localises to the host nucleus. It localises to the host nucleolus. In terms of biological role, plays a role in the protection against apoptosis mediated by cytotoxic cells during the immune response to acute and persistent viral infection. Contributes therefore to latency establishment. Also plays a role in the inhibition of host starvation-induced autophagy which ultimately contributes to the viral chronic infection. Also participates in the viral genome replication within host nucleus. This chain is Apoptosis regulator Bcl-2 homolog (vBCL2), found in Homo sapiens (Human).